The chain runs to 264 residues: Thymidylate synthase (264 aa).

Arg-21 serves as a coordination point for dUMP. (6R)-5,10-methylene-5,6,7,8-tetrahydrofolate is bound at residue His-51. 126–127 (RR) lines the dUMP pocket. Residue Cys-146 is the Nucleophile of the active site. Residues 166 to 169 (RSVD), Asn-177, and 207 to 209 (HLY) contribute to the dUMP site. Asp-169 is a (6R)-5,10-methylene-5,6,7,8-tetrahydrofolate binding site. Ala-263 contributes to the (6R)-5,10-methylene-5,6,7,8-tetrahydrofolate binding site.

This sequence belongs to the thymidylate synthase family. Bacterial-type ThyA subfamily. Homodimer.

The protein localises to the cytoplasm. It carries out the reaction dUMP + (6R)-5,10-methylene-5,6,7,8-tetrahydrofolate = 7,8-dihydrofolate + dTMP. The protein operates within pyrimidine metabolism; dTTP biosynthesis. In terms of biological role, catalyzes the reductive methylation of 2'-deoxyuridine-5'-monophosphate (dUMP) to 2'-deoxythymidine-5'-monophosphate (dTMP) while utilizing 5,10-methylenetetrahydrofolate (mTHF) as the methyl donor and reductant in the reaction, yielding dihydrofolate (DHF) as a by-product. This enzymatic reaction provides an intracellular de novo source of dTMP, an essential precursor for DNA biosynthesis. This is Thymidylate synthase from Geobacillus sp. (strain WCH70).